A 359-amino-acid chain; its full sequence is 3-dehydroquinate synthase (359 aa).

Residues 71-76, 105-109, 129-130, Lys142, Lys151, and 169-172 contribute to the NAD(+) site; these read DGEQYK, GVIGD, TT, and CLST. The Zn(2+) site is built by Glu184, His247, and His264.

It belongs to the sugar phosphate cyclases superfamily. Dehydroquinate synthase family. Co(2+) serves as cofactor. It depends on Zn(2+) as a cofactor. Requires NAD(+) as cofactor.

The protein localises to the cytoplasm. The enzyme catalyses 7-phospho-2-dehydro-3-deoxy-D-arabino-heptonate = 3-dehydroquinate + phosphate. Its pathway is metabolic intermediate biosynthesis; chorismate biosynthesis; chorismate from D-erythrose 4-phosphate and phosphoenolpyruvate: step 2/7. Catalyzes the conversion of 3-deoxy-D-arabino-heptulosonate 7-phosphate (DAHP) to dehydroquinate (DHQ). In Shewanella piezotolerans (strain WP3 / JCM 13877), this protein is 3-dehydroquinate synthase.